The chain runs to 52 residues: Large ribosomal subunit protein bL32c (52 aa).

It belongs to the bacterial ribosomal protein bL32 family.

Its subcellular location is the plastid. The protein resides in the chloroplast. The polypeptide is Large ribosomal subunit protein bL32c (Eucalyptus globulus subsp. globulus (Tasmanian blue gum)).